A 346-amino-acid chain; its full sequence is DNA-directed RNA polymerase subunit alpha (346 aa).

Residues 1-233 (MLRDEVAVSA…DLFIPFLHAE (233 aa)) form an alpha N-terminal domain (alpha-NTD) region. An alpha C-terminal domain (alpha-CTD) region spans residues 268-346 (IELKCIFIDQ…NKFLIGNPSE (79 aa)).

Belongs to the RNA polymerase alpha chain family. As to quaternary structure, in plastids the minimal PEP RNA polymerase catalytic core is composed of four subunits: alpha, beta, beta', and beta''. When a (nuclear-encoded) sigma factor is associated with the core the holoenzyme is formed, which can initiate transcription.

The protein localises to the plastid. It is found in the chloroplast. The enzyme catalyses RNA(n) + a ribonucleoside 5'-triphosphate = RNA(n+1) + diphosphate. DNA-dependent RNA polymerase catalyzes the transcription of DNA into RNA using the four ribonucleoside triphosphates as substrates. This chain is DNA-directed RNA polymerase subunit alpha, found in Ranunculus macranthus (Large buttercup).